A 160-amino-acid chain; its full sequence is Ribosomal RNA large subunit methyltransferase H (160 aa).

Residues Leu78, Gly109, and 128–133 (LSNLTL) each bind S-adenosyl-L-methionine.

It belongs to the RNA methyltransferase RlmH family. As to quaternary structure, homodimer.

The protein resides in the cytoplasm. The catalysed reaction is pseudouridine(1915) in 23S rRNA + S-adenosyl-L-methionine = N(3)-methylpseudouridine(1915) in 23S rRNA + S-adenosyl-L-homocysteine + H(+). Functionally, specifically methylates the pseudouridine at position 1915 (m3Psi1915) in 23S rRNA. The polypeptide is Ribosomal RNA large subunit methyltransferase H (Alcanivorax borkumensis (strain ATCC 700651 / DSM 11573 / NCIMB 13689 / SK2)).